Here is a 453-residue protein sequence, read N- to C-terminus: tRNA modification GTPase MnmE (453 aa).

The (6S)-5-formyl-5,6,7,8-tetrahydrofolate site is built by R28, E90, and R129. The TrmE-type G domain maps to 224–375 (GLRVAIIGRP…LSSALLKLCG (152 aa)). Residue N234 coordinates K(+). Residues 234-239 (NVGKSS), 253-259 (TDLPGTT), 278-281 (DTAG), and 356-358 (SAR) contribute to the GTP site. S238 contacts Mg(2+). K(+)-binding residues include T253, L255, and T258. T259 serves as a coordination point for Mg(2+). K453 provides a ligand contact to (6S)-5-formyl-5,6,7,8-tetrahydrofolate.

It belongs to the TRAFAC class TrmE-Era-EngA-EngB-Septin-like GTPase superfamily. TrmE GTPase family. In terms of assembly, homodimer. Heterotetramer of two MnmE and two MnmG subunits. K(+) serves as cofactor.

The protein resides in the cytoplasm. Functionally, exhibits a very high intrinsic GTPase hydrolysis rate. Involved in the addition of a carboxymethylaminomethyl (cmnm) group at the wobble position (U34) of certain tRNAs, forming tRNA-cmnm(5)s(2)U34. This Synechococcus sp. (strain RCC307) protein is tRNA modification GTPase MnmE.